The primary structure comprises 371 residues: Peptide chain release factor 2 (371 aa).

An N5-methylglutamine modification is found at Gln252.

The protein belongs to the prokaryotic/mitochondrial release factor family. Post-translationally, methylated by PrmC. Methylation increases the termination efficiency of RF2.

Its subcellular location is the cytoplasm. In terms of biological role, peptide chain release factor 2 directs the termination of translation in response to the peptide chain termination codons UGA and UAA. The polypeptide is Peptide chain release factor 2 (Staphylococcus epidermidis (strain ATCC 35984 / DSM 28319 / BCRC 17069 / CCUG 31568 / BM 3577 / RP62A)).